Consider the following 201-residue polypeptide: MSRYTGPSWRVSRRLGVSLSGTGKELARRAYAPGDHGRDRRGKLSEYGTQLREKQKLRFMYGMTERQFSNLFVRAGKIKEGTHGANFMALLERRLDNMVYRLGLATTRRQARQLVNHGHITVDGKRVDIPSYEVKVGQIIAVRDKSKNLDIIKNAVEAVVSRPSYVDFDADKLEGKLNRIPAREDMNADIDEALIVEFYNK.

The interval 26–46 (LARRAYAPGDHGRDRRGKLSE) is disordered. Over residues 35-44 (DHGRDRRGKL) the composition is skewed to basic and acidic residues. Residues 93 to 156 (RRLDNMVYRL…KNLDIIKNAV (64 aa)) enclose the S4 RNA-binding domain.

The protein belongs to the universal ribosomal protein uS4 family. As to quaternary structure, part of the 30S ribosomal subunit. Contacts protein S5. The interaction surface between S4 and S5 is involved in control of translational fidelity.

Its function is as follows. One of the primary rRNA binding proteins, it binds directly to 16S rRNA where it nucleates assembly of the body of the 30S subunit. In terms of biological role, with S5 and S12 plays an important role in translational accuracy. This is Small ribosomal subunit protein uS4 from Limosilactobacillus reuteri (strain DSM 20016) (Lactobacillus reuteri).